The primary structure comprises 711 residues: K(+)-insensitive pyrophosphate-energized proton pump (711 aa).

A run of 5 helical transmembrane segments spans residues 7-27 (LIYGVIVIAALVIIGLIKFIF), 58-78 (IASLALIVAVIIVVANYYGHL), 85-105 (ALSFALHVGFAFITGAFCSAL), 145-165 (LAVTALSLFGVATLFLAYGGL), and 179-199 (IVGFGFGASFVALFAQLGGGI). Residue K202 coordinates substrate. Mg(2+)-binding residues include D205, D209, and D235. A run of 6 helical transmembrane segments spans residues 251–271 (TAAENIGAMILGVGLYPIFGW), 274–294 (ILFPLVARAIGIIASIIGIFF), 311–331 (GYFVTTVVNLIALFFAVKVML), 343–363 (YLLLYGAVVTGVILSYIFVFL), 403–423 (LPVIFISAAIYIAYKLGEMAI), and 431–451 (LYGTAIATMGMLSTTAYILAM). Residue D459 participates in Mg(2+) binding. The next 4 helical transmembrane spans lie at 495–515 (YAIGSAALATFLLFSAYLDEV), 535–555 (EVFIGAFIGAMIVYLFSSTAI), 602–622 (EMVIPGLIVVVTPILVGVILG), and 624–644 (EAAAAFLMIGTISGVILALYL). Residues D652, D678, and D682 each contribute to the Ca(2+) site. K685 contributes to the substrate binding site. A helical membrane pass occupies residues 690 to 710 (PSLHVLIKLISTITLVFVALF).

This sequence belongs to the H(+)-translocating pyrophosphatase (TC 3.A.10) family. K(+)-insensitive subfamily. Homodimer. Mg(2+) serves as cofactor.

It is found in the cell membrane. It carries out the reaction diphosphate + H2O + H(+)(in) = 2 phosphate + 2 H(+)(out). In terms of biological role, proton pump that utilizes the energy of pyrophosphate hydrolysis as the driving force for proton movement across the membrane. Generates a proton motive force. The chain is K(+)-insensitive pyrophosphate-energized proton pump from Caldanaerobacter subterraneus subsp. tengcongensis (strain DSM 15242 / JCM 11007 / NBRC 100824 / MB4) (Thermoanaerobacter tengcongensis).